Here is a 212-residue protein sequence, read N- to C-terminus: Agglutinin isolectin 1 (212 aa).

Positions 1–26 are cleaved as a signal peptide; that stretch reads MKMMSTRALALGAAAVLAFAAATAQA. Position 27 is a pyrrolidone carboxylic acid (Gln27). 4 Chitin-binding type-1 domains span residues 27-68, 69-111, 112-154, and 155-197; these read QRCG…ACWT, SKRC…PCRA, DIKC…ACST, and DKPC…GCDG. 16 disulfide bridges follow: Cys29-Cys44, Cys38-Cys50, Cys43-Cys57, Cys61-Cys66, Cys72-Cys87, Cys81-Cys93, Cys86-Cys100, Cys104-Cys109, Cys115-Cys130, Cys124-Cys136, Cys129-Cys143, Cys147-Cys152, Cys158-Cys173, Cys167-Cys179, Cys172-Cys186, and Cys190-Cys195. 36-38 lines the substrate pocket; that stretch reads MEC. A substrate-binding site is contributed by 88 to 99; the sequence is SQYGYCGFGAEY. 140-141 lines the substrate pocket; it reads SE. A propeptide spanning residues 198-212 is cleaved from the precursor; sequence VFAEAITANSTLLQE.

In terms of assembly, homodimer, u-shaped.

Functionally, N-acetyl-D-glucosamine / N-acetyl-D-neuraminic acid binding lectin. The protein is Agglutinin isolectin 1 of Triticum aestivum (Wheat).